A 168-amino-acid chain; its full sequence is uncharacterized protein (168 aa).

Residues 1-29 constitute a mitochondrion transit peptide; it reads MGWRFPSPSPRQASPVAPLLAAPTAVRSC. Basic and acidic residues predominate over residues 98 to 110; the sequence is GETKARRAREEGK. The interval 98 to 152 is disordered; sequence GETKARRAREEGKLPSLGNAPAPRRRSVAWPAAEGSCAAPESSPPASEASLPAPE. Over residues 128 to 152 the composition is skewed to low complexity; that stretch reads PAAEGSCAAPESSPPASEASLPAPE.

It is found in the mitochondrion. This is an uncharacterized protein from Homo sapiens (Human).